Consider the following 437-residue polypeptide: UDP-N-acetylmuramate--L-alanine ligase (437 aa).

108 to 114 (GAHGKTS) is a binding site for ATP.

It belongs to the MurCDEF family.

The protein resides in the cytoplasm. The enzyme catalyses UDP-N-acetyl-alpha-D-muramate + L-alanine + ATP = UDP-N-acetyl-alpha-D-muramoyl-L-alanine + ADP + phosphate + H(+). Its pathway is cell wall biogenesis; peptidoglycan biosynthesis. In terms of biological role, cell wall formation. In Staphylococcus saprophyticus subsp. saprophyticus (strain ATCC 15305 / DSM 20229 / NCIMB 8711 / NCTC 7292 / S-41), this protein is UDP-N-acetylmuramate--L-alanine ligase.